Here is a 166-residue protein sequence, read N- to C-terminus: Putative tRNA (cytidine(34)-2'-O)-methyltransferase (166 aa).

Residues L83, G109, I130, and S138 each contribute to the S-adenosyl-L-methionine site.

This sequence belongs to the class IV-like SAM-binding methyltransferase superfamily. RNA methyltransferase TrmH family. TrmL subfamily.

It is found in the cytoplasm. It carries out the reaction cytidine(34) in tRNA + S-adenosyl-L-methionine = 2'-O-methylcytidine(34) in tRNA + S-adenosyl-L-homocysteine + H(+). It catalyses the reaction 5-carboxymethylaminomethyluridine(34) in tRNA(Leu) + S-adenosyl-L-methionine = 5-carboxymethylaminomethyl-2'-O-methyluridine(34) in tRNA(Leu) + S-adenosyl-L-homocysteine + H(+). Could methylate the ribose at the nucleotide 34 wobble position in tRNA. The chain is Putative tRNA (cytidine(34)-2'-O)-methyltransferase from Mycoplasma pneumoniae (strain ATCC 29342 / M129 / Subtype 1) (Mycoplasmoides pneumoniae).